The sequence spans 992 residues: RNA-binding protein 12 (992 aa).

Positions 304 to 379 constitute an RRM 1 domain; it reads LYVSVHGMPF…RYVEVSPATE (76 aa). Residues S352 and S375 each carry the phosphoserine modification. The tract at residues 393–424 is disordered; the sequence is QSMGPSGQAHPPPQTLPRSKSPSGQKRSRSRS. Polar residues predominate over residues 408–417; that stretch reads LPRSKSPSGQ. A phosphoserine mark is found at S420, S422, and S424. Residues 430–507 form the RRM 2 domain; the sequence is FCVYLKGLPF…RFIQVHPITK (78 aa). S525 carries the post-translational modification Phosphoserine. The disordered stretch occupies residues 849–913; it reads FGGIPQNFGN…PGFGASSGKP (65 aa). Over residues 876–887 the composition is skewed to low complexity; the sequence is LGSVPGHLSGPP. Residues 916–992 enclose the RRM 3 domain; it reads TIIKVQNMPF…GSRKVKLVLG (77 aa).

The protein resides in the nucleus. The sequence is that of RNA-binding protein 12 (Rbm12) from Mus musculus (Mouse).